Consider the following 546-residue polypeptide: Chaperonin GroEL 4 (546 aa).

Residues 30-33 (TLGP), K51, 87-91 (DGTTT), G415, and D496 contribute to the ATP site.

Belongs to the chaperonin (HSP60) family. In terms of assembly, forms a cylinder of 14 subunits composed of two heptameric rings stacked back-to-back. Interacts with the co-chaperonin GroES.

The protein resides in the cytoplasm. The enzyme catalyses ATP + H2O + a folded polypeptide = ADP + phosphate + an unfolded polypeptide.. Its function is as follows. Together with its co-chaperonin GroES, plays an essential role in assisting protein folding. The GroEL-GroES system forms a nano-cage that allows encapsulation of the non-native substrate proteins and provides a physical environment optimized to promote and accelerate protein folding. In Bradyrhizobium sp. (strain BTAi1 / ATCC BAA-1182), this protein is Chaperonin GroEL 4.